The primary structure comprises 26 residues: Turripeptide OL57 (26 aa).

Post-translationally, contains 2 disulfide bonds. In terms of tissue distribution, expressed by the venom duct.

The protein resides in the secreted. Acts as a neurotoxin by inhibiting an ion channel. This is Turripeptide OL57 from Iotyrris olangoensis (Sea snail).